Reading from the N-terminus, the 173-residue chain is 6,7-dimethyl-8-ribityllumazine synthase (173 aa).

Residues Y34, 65–67 (ALE), and 94–96 (CVI) contribute to the 5-amino-6-(D-ribitylamino)uracil site. 99–100 (ET) contributes to the (2S)-2-hydroxy-3-oxobutyl phosphate binding site. H102 acts as the Proton donor in catalysis. N127 contacts 5-amino-6-(D-ribitylamino)uracil. R141 is a binding site for (2S)-2-hydroxy-3-oxobutyl phosphate.

The protein belongs to the DMRL synthase family.

It catalyses the reaction (2S)-2-hydroxy-3-oxobutyl phosphate + 5-amino-6-(D-ribitylamino)uracil = 6,7-dimethyl-8-(1-D-ribityl)lumazine + phosphate + 2 H2O + H(+). It participates in cofactor biosynthesis; riboflavin biosynthesis; riboflavin from 2-hydroxy-3-oxobutyl phosphate and 5-amino-6-(D-ribitylamino)uracil: step 1/2. Catalyzes the formation of 6,7-dimethyl-8-ribityllumazine by condensation of 5-amino-6-(D-ribitylamino)uracil with 3,4-dihydroxy-2-butanone 4-phosphate. This is the penultimate step in the biosynthesis of riboflavin. This is 6,7-dimethyl-8-ribityllumazine synthase from Methylorubrum extorquens (strain CM4 / NCIMB 13688) (Methylobacterium extorquens).